We begin with the raw amino-acid sequence, 481 residues long: Thyroid receptor-interacting protein 6 (481 aa).

Over residues 1-12 the composition is skewed to pro residues; the sequence is MSGPTWLPPKQP. Residues 1–259 form a disordered region; it reads MSGPTWLPPK…QVPLSQPPEE (259 aa). Arginine 25 is subject to Asymmetric dimethylarginine; alternate. Arginine 25 carries the post-translational modification Omega-N-methylarginine; alternate. Tyrosine 55 is modified (phosphotyrosine; by SRC). The residue at position 92 (serine 92) is a Phosphoserine. The span at 108–122 shows a compositional bias: basic and acidic residues; that stretch reads DGGRGHAPRRPDRQA. Position 111 is an omega-N-methylarginine (arginine 111). 2 stretches are compositionally biased toward low complexity: residues 153 to 173 and 183 to 193; these read SPYG…AGPA and PVRGCGPPRRG. An omega-N-methylarginine mark is found at arginine 185 and arginine 192. Serine 195 bears the Phosphoserine mark. An Omega-N-methylarginine modification is found at arginine 211. Residues 221–233 are compositionally biased toward basic and acidic residues; the sequence is SHREPGPGVKEEA. Arginine 243 is modified (omega-N-methylarginine). Residue serine 254 is modified to Phosphoserine. 3 consecutive LIM zinc-binding domains span residues 284 to 321, 344 to 403, and 404 to 472; these read CGGC…QLRG, CSTC…FAPR, and CSVC…RIQE. The tract at residues 474–481 is interaction with MAGI1 and PTPN13; the sequence is SATVTTDC.

The protein belongs to the zyxin/ajuba family. In terms of assembly, specifically interacts with the ligand binding domain of the thyroid receptor (TR) in the presence of thyroid hormone. Interacts (via the third LIM domain and C-terminus) with PTPN13 (via the second PDZ domain). Interacts (via the second LIM domain or via the third LIM domain plus C-terminus) with PDLIM4 (via PDZ domain). Found in a complex with PTPN13 and PDLIM4. Interacts with SVIL isoform 2. Interacts with LPAR2 but not other LPA receptors. Interacts with PRKAA2. Interacts with MAGI1. Interacts with SCRIB. In terms of processing, phosphorylation at Tyr-55 by SRC is required for enhancement of lysophosphatidic acid-induced cell migration. Tyr-55 is dephosphorylated by PTPN13.

It is found in the cytoplasm. Its subcellular location is the cytoskeleton. The protein resides in the cell junction. The protein localises to the focal adhesion. It localises to the nucleus. Its function is as follows. Relays signals from the cell surface to the nucleus to weaken adherens junction and promote actin cytoskeleton reorganization and cell invasiveness. Involved in lysophosphatidic acid-induced cell adhesion and migration. Acts as a transcriptional coactivator for NF-kappa-B and JUN, and mediates the transrepression of these transcription factors induced by glucocorticoid receptor. This chain is Thyroid receptor-interacting protein 6 (TRIP6), found in Bos taurus (Bovine).